A 109-amino-acid chain; its full sequence is Aquaporin-2 (109 aa).

The Cytoplasmic portion of the chain corresponds to 1-6 (SIAFSK). A helical membrane pass occupies residues 7-27 (AVFSEFLATLLFVFFGLGSAL). Topologically, residues 28-35 (NWPQALPS) are extracellular. Residues 36-54 (GLQIAMAFGLAIGTLVQTL) traverse the membrane as a helical segment. Topologically, residues 55 to 59 (GHISG) are cytoplasmic. The segment at residues 60–69 (AHINPAVTVA) is an intramembrane region (discontinuously helical). Positions 63–65 (NPA) match the NPA 1 motif. Over 70-80 (CLVGCHVSFLR) the chain is Cytoplasmic. Residues 81–102 (AIFYVAAQLLGAVAGAALLHEL) form a helical membrane-spanning segment. Residues 103–109 (TPPDIRG) lie on the Extracellular side of the membrane.

This sequence belongs to the MIP/aquaporin (TC 1.A.8) family. In terms of assembly, homotetramer. Serine phosphorylation is necessary and sufficient for expression at the apical membrane. Endocytosis is not phosphorylation-dependent. In terms of processing, N-glycosylated.

The protein localises to the apical cell membrane. It is found in the basolateral cell membrane. Its subcellular location is the cell membrane. The protein resides in the cytoplasmic vesicle membrane. It localises to the golgi apparatus. The protein localises to the trans-Golgi network membrane. The enzyme catalyses H2O(in) = H2O(out). It carries out the reaction glycerol(in) = glycerol(out). Functionally, forms a water-specific channel that provides the plasma membranes of renal collecting duct with high permeability to water, thereby permitting water to move in the direction of an osmotic gradient. Plays an essential role in renal water homeostasis. Could also be permeable to glycerol. The protein is Aquaporin-2 of Orycteropus afer (Aardvark).